We begin with the raw amino-acid sequence, 89 residues long: Small ribosomal subunit protein uS15 (89 aa).

The tract at residues 1 to 22 is disordered; sequence MPLSKEQKQEVMEKYKLHEHDT.

This sequence belongs to the universal ribosomal protein uS15 family. Part of the 30S ribosomal subunit. Forms a bridge to the 50S subunit in the 70S ribosome, contacting the 23S rRNA.

One of the primary rRNA binding proteins, it binds directly to 16S rRNA where it helps nucleate assembly of the platform of the 30S subunit by binding and bridging several RNA helices of the 16S rRNA. In terms of biological role, forms an intersubunit bridge (bridge B4) with the 23S rRNA of the 50S subunit in the ribosome. The chain is Small ribosomal subunit protein uS15 from Natranaerobius thermophilus (strain ATCC BAA-1301 / DSM 18059 / JW/NM-WN-LF).